Consider the following 441-residue polypeptide: Polyketide methyltransferase ustM (441 aa).

The methyltransferase (CMeT) domain stretch occupies residues 266–368 (LEVGAGLGGT…VRKLLRGGGF (103 aa)).

This sequence belongs to the methyltransferase superfamily.

Its pathway is secondary metabolite biosynthesis. Polyketide methyltransferase; part of the gene cluster that mediates the biosynthesis of ustilaginoidins, dimeric gamma-naphthopyrones isolated from different fungal species. The first step in the biosynthesis of ustilaginoidins is the production of gamma-naphthopyrone precursor YWA1 by the non-reducing polyketide synthase ustP, via condensation of one acetyl-CoA starter unit with 6 malonyl-CoA units. YWA1 is then probably substrate of the ustZ to yield norrubrofusarin via a dehydration reaction. A key enzyme in the biosynthetic pathway is the laccase ustL, which catalyzes the oxidative dimerization of norrubrofusarin to ustilaginoidin A. It can produce the M- and P-atropisomers in varying amounts, depending on the reaction conditions. For the biosynthesis of 3-methylustilaginoid in derivatives such as chaetochromin A, a methylated derivative of YWA1 is required. The C-methylation is considered to be catalyzed by ustM, the phosphopantetheine attachment site of which indicates that it acts on the growing polyketide chain before release of the product. For the biosynthesis of chaetochromin A, it is assumed that saturation of the D2 double bond takes place before dimerization, and is probably catalyzed by an external reductase because no candidate gene was identified within the cluster. This chain is Polyketide methyltransferase ustM, found in Ustilaginoidea virens (Rice false smut fungus).